The following is a 316-amino-acid chain: Pantothenate kinase (316 aa).

95–102 (GSVAVGKS) is a binding site for ATP.

The protein belongs to the prokaryotic pantothenate kinase family.

It localises to the cytoplasm. The catalysed reaction is (R)-pantothenate + ATP = (R)-4'-phosphopantothenate + ADP + H(+). It functions in the pathway cofactor biosynthesis; coenzyme A biosynthesis; CoA from (R)-pantothenate: step 1/5. The protein is Pantothenate kinase of Salmonella gallinarum (strain 287/91 / NCTC 13346).